The following is a 492-amino-acid chain: ATP synthase subunit beta, plastid (492 aa).

170 to 177 is a binding site for ATP; sequence GGAGVGKT.

It belongs to the ATPase alpha/beta chains family. As to quaternary structure, F-type ATPases have 2 components, CF(1) - the catalytic core - and CF(0) - the membrane proton channel. CF(1) has five subunits: alpha(3), beta(3), gamma(1), delta(1), epsilon(1). CF(0) has four main subunits: a(1), b(1), b'(1) and c(9-12).

The protein resides in the plastid membrane. The catalysed reaction is ATP + H2O + 4 H(+)(in) = ADP + phosphate + 5 H(+)(out). Its function is as follows. Produces ATP from ADP in the presence of a proton gradient across the membrane. The catalytic sites are hosted primarily by the beta subunits. This chain is ATP synthase subunit beta, plastid, found in Aneura mirabilis (Parasitic liverwort).